The chain runs to 548 residues: Membrane-associated tyrosine- and threonine-specific cdc2-inhibitory kinase (548 aa).

The segment at 61–89 is disordered; that stretch reads PNKQRSWSQPRPQSVSFRSPQNKTPASKL. Polar residues predominate over residues 63-85; it reads KQRSWSQPRPQSVSFRSPQNKTP. The 251-residue stretch at 103 to 353 folds into the Protein kinase domain; it reads FKSICKLGRG…VDWLLSLPAI (251 aa). Residues 109–117 and Lys-132 each bind ATP; that span reads LGRGSFGEV. Asp-226 acts as the Proton acceptor in catalysis. Mg(2+)-binding residues include Asn-231, Asp-244, and Gly-246. Residues 376–392 carry the Membrane-association motif motif; the sequence is VYQFIVWLLSFVFQWLN. The segment at 464–523 is disordered; that stretch reads SPDLLSRPSLGSTSTPRNLSPEFSMRKRSALPLTPNVSRISQDSTGKSRSPSTSHSSSGF. A compositionally biased stretch (polar residues) spans 472–481; that stretch reads SLGSTSTPRN. Phosphothreonine; by CDK1 is present on Thr-478. Residues 507 to 521 show a composition bias toward low complexity; it reads STGKSRSPSTSHSSS.

The protein belongs to the protein kinase superfamily. Ser/Thr protein kinase family. WEE1 subfamily. As to quaternary structure, interacts with CDC2-CCNB1 complex. Interacts with Mos during oocyte maturation. Post-translationally, autophosphorylated. Phosphorylated on undefined residues by RSK2 and Mos kinases. Phosphorylation at Thr-478 by cdk1 creates a docking site for plk1/plx1, leading to subsequent phosphorylation by plk1/plk1 and inhibition of the protein kinase activity kinase activity.

It localises to the endoplasmic reticulum membrane. The protein localises to the golgi apparatus membrane. It carries out the reaction L-seryl-[protein] + ATP = O-phospho-L-seryl-[protein] + ADP + H(+). The catalysed reaction is L-threonyl-[protein] + ATP = O-phospho-L-threonyl-[protein] + ADP + H(+). Negatively regulated by hyperphosphorylation during mitosis. The plk1/plk1 protein kinase may be required for mitotic phosphorylation. Inactivated during oocyte maturation by phosphorylation by RSK2 and Mos kinase. Its function is as follows. Acts as a negative regulator of entry into mitosis (G2 to M transition) by phosphorylation of the CDK1 kinase specifically when CDK1 is complexed to cyclins. Mediates phosphorylation of CDK1 predominantly on 'Thr-14'. Also involved in Golgi fragmentation. May be involved in phosphorylation of CDK1 on 'Tyr-15' to a lesser degree, however tyrosine kinase activity is unclear and may be indirect. In Xenopus laevis (African clawed frog), this protein is Membrane-associated tyrosine- and threonine-specific cdc2-inhibitory kinase (pkmyt1).